A 324-amino-acid polypeptide reads, in one-letter code: D-alanine--D-alanine ligase (324 aa).

The ATP-grasp domain occupies 121-321 (NQYLKAFGVR…IKDVMTDIIE (201 aa)). 149-204 (MEKIGLPCFIKPSLGGSSFGVTKVKTKEQIQPAIVKAFEEAQEVLVEAFMEGTELT) provides a ligand contact to ATP. Mg(2+)-binding residues include Asp-275, Glu-288, and Asn-290.

The protein belongs to the D-alanine--D-alanine ligase family. The cofactor is Mg(2+). It depends on Mn(2+) as a cofactor.

It is found in the cytoplasm. It carries out the reaction 2 D-alanine + ATP = D-alanyl-D-alanine + ADP + phosphate + H(+). Its pathway is cell wall biogenesis; peptidoglycan biosynthesis. Cell wall formation. This is D-alanine--D-alanine ligase from Bacteroides thetaiotaomicron (strain ATCC 29148 / DSM 2079 / JCM 5827 / CCUG 10774 / NCTC 10582 / VPI-5482 / E50).